The following is a 120-amino-acid chain: Mating factor alpha-2 (120 aa).

The N-terminal stretch at 1–21 is a signal peptide; it reads MKFISTFLTFILAAVSVTASS. Propeptides lie at residues 22–86 and 102–107; these read DEDI…VADA and EANADA.

The active factor is excreted into the culture medium by haploid cells of the alpha mating type and acts on cells of the opposite mating type (type A). It mediates the conjugation process between the two types by inhibiting the initiation of DNA synthesis in type a cells and synchronizing them with type alpha. This chain is Mating factor alpha-2 (MF(ALPHA)2), found in Saccharomyces cerevisiae (strain ATCC 204508 / S288c) (Baker's yeast).